Reading from the N-terminus, the 849-residue chain is MANILRKIIENDKGEIKKLEKTAKKVESYADAMAALSDEELQAKTEEFKQRYQNGESLDQLLPEAFAVVREGAKRVLGLFPYRVQIMGGIVLHYGDVAEMRTGEGKTLTATMPVYLNAISGEGVHVITVNEYLSERDATEMGELYSWLGLSVGINLSSKSPAEKREAYNCDITYSTSSEVGFDYLRDNMVVRKENMVQRPLNFALVDEVDSVLIDEARTPLIVSGPVSSETNQLYHRADAFVKTLTEDDYAIDIPTKTIGLNDSGIDKAEEFFNLENLYDIDNVALTHYIDNALRANYIMLRDIDYVVSPEQEILIVDQFTGRTMEGRRFSDGLHQAIEAKEGVPVQEETKTSASITYQNMFRMYKKLSGMTGTGKTEEDEFREIYNMRVIPIPTNRPIQRIDHDDLLYSTLDAKFRAVVQDVKRRYEKGQPVLIGTVAVETSDLISKMLVDAGIPHEVLNAKNHEKEAHIIMNAGQRGAVTIATNMAGRGTDIKLGEGVLELGGLCVIGTERHESRRIDNQLRGRSGRQGDPGESQFYLSLEDELMRRFGSDRIKHVLERLNADDEDIVIKSRMLTRQVESAQKRVEGNNYDTRKQVLQYDDVMREQREIIYAERYDVITAERDLEPEIKAMIKRTINRTVDGHSRNDQEEALKGILNFARQALVPEDAISLEDLKEVGEVTKRSVNYDAIKVYLTELADNVYDRQIKKLRSEEAIREFQKVLILMVVDNKWTDHIDALDQLRNAVGMRGYAQNNPIVEYQSESFKMFQDMIGAIEYDVTRTMMKAQIHEQSREHVNERVSTTATGNIQAHQADANGQEIDFSKVGRNDFCPCGSGKKFKNCHGRKQF.

ATP is bound by residues Q85, 103–107 (GEGKT), and D493. Residues C832, C834, C843, and H844 each contribute to the Zn(2+) site.

Belongs to the SecA family. In terms of assembly, monomer and homodimer. Part of the essential Sec protein translocation apparatus which comprises SecA, SecYEG and auxiliary proteins SecDF. Other proteins may also be involved. The cofactor is Zn(2+).

It localises to the cell membrane. The protein localises to the cytoplasm. The catalysed reaction is ATP + H2O + cellular proteinSide 1 = ADP + phosphate + cellular proteinSide 2.. Part of the Sec protein translocase complex. Interacts with the SecYEG preprotein conducting channel. Has a central role in coupling the hydrolysis of ATP to the transfer of proteins into and across the cell membrane, serving as an ATP-driven molecular motor driving the stepwise translocation of polypeptide chains across the membrane. The polypeptide is Protein translocase subunit SecA (Streptococcus thermophilus (strain ATCC BAA-491 / LMD-9)).